We begin with the raw amino-acid sequence, 635 residues long: Threonine--tRNA ligase (635 aa).

In terms of domain architecture, TGS spans 1 to 61 (MIKITLKDGK…HKDSSLEILT (61 aa)). Residues 242–532 (DHRKLGKELD…LIEQYAGAFP (291 aa)) are catalytic. The Zn(2+) site is built by Cys333, His384, and His509.

The protein belongs to the class-II aminoacyl-tRNA synthetase family. Homodimer. Zn(2+) serves as cofactor.

Its subcellular location is the cytoplasm. The enzyme catalyses tRNA(Thr) + L-threonine + ATP = L-threonyl-tRNA(Thr) + AMP + diphosphate + H(+). In terms of biological role, catalyzes the attachment of threonine to tRNA(Thr) in a two-step reaction: L-threonine is first activated by ATP to form Thr-AMP and then transferred to the acceptor end of tRNA(Thr). Also edits incorrectly charged L-seryl-tRNA(Thr). The sequence is that of Threonine--tRNA ligase from Clostridium botulinum (strain 657 / Type Ba4).